A 532-amino-acid chain; its full sequence is Muscarinic acetylcholine receptor M5 (532 aa).

Residues 1 to 29 lie on the Extracellular side of the membrane; the sequence is MEGDSYHNATTVNGTPVNHQPLERHRLWE. Residue asparagine 8 is glycosylated (N-linked (GlcNAc...) asparagine). Residues 30–53 form a helical membrane-spanning segment; that stretch reads VITIAAVTAVVSLITIVGNVLVMI. The Cytoplasmic segment spans residues 54-66; the sequence is SFKVNSQLKTVNN. The helical transmembrane segment at 67–87 threads the bilayer; the sequence is YYLLSLACADLIIGIFSMNLY. At 88 to 104 the chain is on the extracellular side; sequence TTYILMGRWALGSLACD. Cysteine 103 and cysteine 183 are disulfide-bonded. Residues 105 to 126 form a helical membrane-spanning segment; sequence LWLALDYVASNASVMNLLVISF. Over 127–146 the chain is Cytoplasmic; that stretch reads DRYFSITRPLTYRAKRTPKR. The chain crosses the membrane as a helical span at residues 147-169; that stretch reads AGIMIGLAWLISFILWAPAILCW. Residues 170-191 lie on the Extracellular side of the membrane; that stretch reads QYLVGKRTVPLDECQIQFLSEP. Residues 192–214 form a helical membrane-spanning segment; that stretch reads TITFGTAIAAFYIPVSVMTILYC. The Cytoplasmic portion of the chain corresponds to 215–443; the sequence is RIYRETEKRT…LVKERKAAQT (229 aa). Positions 262–294 are disordered; that stretch reads AQRERNQASWSSSRRSTSTTGKPSQATGPSANW. A compositionally biased stretch (low complexity) spans 270–281; sequence SWSSSRRSTSTT. The span at 282-291 shows a compositional bias: polar residues; the sequence is GKPSQATGPS. A helical membrane pass occupies residues 444–464; it reads LSAILLAFIITWTPYNIMVLV. Residues 465 to 478 are Extracellular-facing; that stretch reads STFCDKCVPVTLWH. The helical transmembrane segment at 479 to 498 threads the bilayer; that stretch reads LGYWLCYVNSTVNPICYALC. The Cytoplasmic portion of the chain corresponds to 499–532; the sequence is NRTFRKTFKMLLLCRWKKKKVEEKLYWQGNSKLP. 2 positions are modified to phosphothreonine: threonine 501 and threonine 505.

It belongs to the G-protein coupled receptor 1 family. Muscarinic acetylcholine receptor subfamily. CHRM5 sub-subfamily.

It localises to the cell membrane. Its subcellular location is the postsynaptic cell membrane. Functionally, the muscarinic acetylcholine receptor mediates various cellular responses, including inhibition of adenylate cyclase, breakdown of phosphoinositides and modulation of potassium channels through the action of G proteins. Primary transducing effect is Pi turnover. This is Muscarinic acetylcholine receptor M5 (CHRM5) from Homo sapiens (Human).